The chain runs to 974 residues: Short transient receptor potential channel 5 (974 aa).

The Cytoplasmic portion of the chain corresponds to 1–325; it reads MAQLYYKKVN…YDGFPGWRRK (325 aa). ANK repeat units follow at residues 30-60, 69-97, 98-124, and 141-170; these read SAEEKAFLNAVEKGDYATVKQALQEAEIYYN, LGRSALLIAIENENLEIMELLLNHSVYVG, DALLYAIRKEVVGAVELLLSYRKPSGE, and PDITPIMLAAHTNNYEIIKLLVQKRVTIPR. Zn(2+) is bound by residues His-172, Cys-176, Cys-178, and Cys-181. An intramembrane region (discontinuously helical) is located at residues 326–360; sequence HWVVKLLTCMTIGFLFPMLSIAYLISPRSNLGLFI. At 361–363 the chain is on the cytoplasmic side; sequence KKP. Residues 364 to 384 traverse the membrane as a helical segment; that stretch reads FIKFICHTASYLTFLFMLLLA. The Extracellular portion of the chain corresponds to 385-404; the sequence is SQHIVRTDLHVQGPPPTVVE. Residues 405 to 419 form a helical membrane-spanning segment; it reads WMILPWVLGFIWGEI. Ca(2+) contacts are provided by Glu-418, Glu-421, Asn-436, and Asp-439. Over 420–433 the chain is Cytoplasmic; the sequence is KEMWDGGFTEYIHD. Residues 434–454 form a helical membrane-spanning segment; the sequence is WWNLMDFAMNSLYLATISLKI. The Extracellular portion of the chain corresponds to 455–476; that stretch reads VAYVKYNGSRPREEWEMWHPTL. Residue Asn-461 is glycosylated (N-linked (GlcNAc...) asparagine). The helical transmembrane segment at 477–497 threads the bilayer; that stretch reads IAEALFAISNILSSLRLISLF. The Cytoplasmic segment spans residues 498 to 512; that stretch reads TANSHLGPLQISLGR. A helical membrane pass occupies residues 513-535; the sequence is MLLDILKFLFIYCLVLLAFANGL. Over 536-603 the chain is Extracellular; it reads NQLYFYYETR…HEFTEFVGAT (68 aa). A disulfide bridge links Cys-553 with Cys-558. The helical transmembrane segment at 604 to 624 threads the bilayer; it reads MFGTYNVISLVVLLNMLIAMM. Topologically, residues 625–974 are cytoplasmic; it reads NNSYQLIADH…GQEEQVTTRL (350 aa). 2 disordered regions span residues 766–795 and 811–838; these read QPRRSLSTSSTELSQRDDTNDGSGGARAKS and GPPLIRTMPRASGAQGKSKAESSSKRSF. Residues 769–778 show a composition bias toward low complexity; that stretch reads RSLSTSSTEL. Positions 972 to 974 are essential for binding to NHERF1 PDZ domain; the sequence is TRL.

This sequence belongs to the transient receptor (TC 1.A.4) family. STrpC subfamily. TRPC5 sub-subfamily. As to quaternary structure, homotetramer. Heterotetramer with TRPC1 and/or TRPC4. Each subunit in the homomeric ion channel (via ANK repeats) interacts with one copy of GTP-bound GNAI3; the interaction is direct and activates the ion channel. Interacts with TRPC4AP. Interacts with NHERF1. Interacts with MX1 and RNF24. Interacts (via C-terminus) with CABP1. Interacts with SESTD1 (via the spectrin 1 repeat). Interacts with PLSCR1. Interacts with PKD2L2. Expressed in brain.

It is found in the cell membrane. The enzyme catalyses Ca(2+)(in) = Ca(2+)(out). Activated by G-protein coupled receptors via direct interaction with GTP-bound GNAI3, which increases the channel sensitivity to phosphatidylinositol bisphosphate. May be activated by intracellular calcium store depletion. Calcium channel activity is enhanced by MYLK, that promotes its subcellular localization at the plasma membrane. Forms a receptor-activated non-selective calcium permeant cation channel. Mediates calcium-dependent phosphatidylserine externalization and apoptosis in neurons via its association with PLSCR1. Acts on distinct neuronal populations in the hypothalamus to regulate innate behaviors including feeding, anxiety (flight/fight/fear), socialization and maternal care. The sequence is that of Short transient receptor potential channel 5 (TRPC5) from Oryctolagus cuniculus (Rabbit).